The primary structure comprises 139 residues: D-ribose pyranase (139 aa).

Residue His-20 is the Proton donor of the active site. Residues Asp-28, His-106, and 128-130 each bind substrate; that span reads YAN.

The protein belongs to the RbsD / FucU family. RbsD subfamily. In terms of assembly, homodecamer.

The protein resides in the cytoplasm. The catalysed reaction is beta-D-ribopyranose = beta-D-ribofuranose. The protein operates within carbohydrate metabolism; D-ribose degradation; D-ribose 5-phosphate from beta-D-ribopyranose: step 1/2. In terms of biological role, catalyzes the interconversion of beta-pyran and beta-furan forms of D-ribose. This is D-ribose pyranase from Photobacterium profundum (strain SS9).